The following is a 501-amino-acid chain: Bifunctional purine biosynthesis protein PurH (501 aa).

The region spanning 1–144 (MKKRALISVF…KNFKDVVVLS (144 aa)) is the MGS-like domain.

This sequence belongs to the PurH family.

The enzyme catalyses (6R)-10-formyltetrahydrofolate + 5-amino-1-(5-phospho-beta-D-ribosyl)imidazole-4-carboxamide = 5-formamido-1-(5-phospho-D-ribosyl)imidazole-4-carboxamide + (6S)-5,6,7,8-tetrahydrofolate. The catalysed reaction is IMP + H2O = 5-formamido-1-(5-phospho-D-ribosyl)imidazole-4-carboxamide. Its pathway is purine metabolism; IMP biosynthesis via de novo pathway; 5-formamido-1-(5-phospho-D-ribosyl)imidazole-4-carboxamide from 5-amino-1-(5-phospho-D-ribosyl)imidazole-4-carboxamide (10-formyl THF route): step 1/1. It functions in the pathway purine metabolism; IMP biosynthesis via de novo pathway; IMP from 5-formamido-1-(5-phospho-D-ribosyl)imidazole-4-carboxamide: step 1/1. In Clostridium perfringens (strain 13 / Type A), this protein is Bifunctional purine biosynthesis protein PurH.